The sequence spans 258 residues: Imidazole glycerol phosphate synthase subunit HisF (258 aa).

Residues Asp-11 and Asp-130 contribute to the active site.

It belongs to the HisA/HisF family. Heterodimer of HisH and HisF.

The protein resides in the cytoplasm. The catalysed reaction is 5-[(5-phospho-1-deoxy-D-ribulos-1-ylimino)methylamino]-1-(5-phospho-beta-D-ribosyl)imidazole-4-carboxamide + L-glutamine = D-erythro-1-(imidazol-4-yl)glycerol 3-phosphate + 5-amino-1-(5-phospho-beta-D-ribosyl)imidazole-4-carboxamide + L-glutamate + H(+). The protein operates within amino-acid biosynthesis; L-histidine biosynthesis; L-histidine from 5-phospho-alpha-D-ribose 1-diphosphate: step 5/9. IGPS catalyzes the conversion of PRFAR and glutamine to IGP, AICAR and glutamate. The HisF subunit catalyzes the cyclization activity that produces IGP and AICAR from PRFAR using the ammonia provided by the HisH subunit. The chain is Imidazole glycerol phosphate synthase subunit HisF from Azorhizobium caulinodans (strain ATCC 43989 / DSM 5975 / JCM 20966 / LMG 6465 / NBRC 14845 / NCIMB 13405 / ORS 571).